Here is a 96-residue protein sequence, read N- to C-terminus: Ferredoxin-1 (96 aa).

Residues 1–95 enclose the 2Fe-2S ferredoxin-type domain; it reads MKVIINGKEF…DCDEIVIESE (95 aa). The [2Fe-2S] cluster site is built by Cys-34, Cys-39, Cys-42, and Cys-78. Residues Cys-52 and Cys-87 are joined by a disulfide bond.

This sequence belongs to the 2Fe2S plant-type ferredoxin family. It depends on [2Fe-2S] cluster as a cofactor.

Functionally, ferredoxins are iron-sulfur proteins that transfer electrons in a wide variety of metabolic reactions. The protein is Ferredoxin-1 (fdx1) of Aquifex aeolicus (strain VF5).